The chain runs to 357 residues: DNA replication and repair protein RecF (357 aa).

30-37 (GANGSGKT) provides a ligand contact to ATP.

Belongs to the RecF family.

It is found in the cytoplasm. Functionally, the RecF protein is involved in DNA metabolism; it is required for DNA replication and normal SOS inducibility. RecF binds preferentially to single-stranded, linear DNA. It also seems to bind ATP. The protein is DNA replication and repair protein RecF of Salmonella paratyphi B (strain ATCC BAA-1250 / SPB7).